We begin with the raw amino-acid sequence, 286 residues long: Mating type protein A-1 (286 aa).

The segment at residues 40–95 (AAKKKVNGFMSFRSYYSPLFSQLPQKERSPFMTILWQHDPFHNEWNFMCSVYSSIR) is a DNA-binding region (alpha box).

This sequence belongs to the MATALPHA1 family.

It is found in the nucleus. Its function is as follows. Required for expression of the heterokaryon incompatibility and sexual functions. The chain is Mating type protein A-1 (MTA-1) from Neurospora africana.